A 361-amino-acid polypeptide reads, in one-letter code: Glyceraldehyde-3-phosphate dehydrogenase, glycosomal (361 aa).

Residues 13–14, D39, Q92, and S135 each bind NAD(+); that span reads RI. Residues 166-168, T198, 227-228, and R250 each bind D-glyceraldehyde 3-phosphate; these read SCT and TG. The active-site Nucleophile is the C167. An NAD(+)-binding site is contributed by N336. The Microbody targeting signal motif lies at 359–361; that stretch reads SKM.

Belongs to the glyceraldehyde-3-phosphate dehydrogenase family. As to quaternary structure, homotetramer.

Its subcellular location is the glycosome. The enzyme catalyses D-glyceraldehyde 3-phosphate + phosphate + NAD(+) = (2R)-3-phospho-glyceroyl phosphate + NADH + H(+). The protein operates within carbohydrate degradation; glycolysis; pyruvate from D-glyceraldehyde 3-phosphate: step 1/5. The chain is Glyceraldehyde-3-phosphate dehydrogenase, glycosomal (GAPG) from Leishmania mexicana.